Consider the following 126-residue polypeptide: MDAVTVYHGKISREMGEKLLLATGLDGSYLLRDSESVPGVYCLCVLYQGYIYTYRVSQTETGSWSAETAPGVHKRFFRKVKNLISAFQKPDQGIVTPLQYPVEKSSARSPQAPTGRRDSDICLKAP.

One can recognise an SH2 domain in the interval 6–102 (VYHGKISREM…GIVTPLQYPV (97 aa)). The interaction with FYN SH3 domain stretch occupies residues 67 to 92 (ETAPGVHKRFFRKVKNLISAFQKPDQ). The residue at position 89 (K89) is an N6-acetyllysine. Residues 100-126 (YPVEKSSARSPQAPTGRRDSDICLKAP) form a disordered region. Residues 115-126 (GRRDSDICLKAP) show a composition bias toward basic and acidic residues. S119 bears the Phosphoserine mark.

In terms of assembly, interacts with CD84, CD244, LY9, SLAMF1 and FYN. Interacts with NTRK1, NTRK2 and NTRK3.

It localises to the cytoplasm. Functionally, cytoplasmic adapter regulating receptors of the signaling lymphocytic activation molecule (SLAM) family such as SLAMF1, CD244, LY9, CD84, SLAMF6 and SLAMF7. In SLAM signaling seems to cooperate with SH2D1B/EAT-2. Initially it has been proposed that association with SLAMF1 prevents SLAMF1 binding to inhibitory effectors including INPP5D/SHIP1 and PTPN11/SHP-2. However, by simultaneous interactions, recruits FYN which subsequently phosphorylates and activates SLAMF1. Positively regulates CD244/2B4- and CD84-mediated natural killer (NK) cell functions. Can also promote CD48-, SLAMF6 -, LY9-, and SLAMF7-mediated NK cell activation. In the context of NK cell-mediated cytotoxicity enhances conjugate formation with target cells. May also regulate the activity of the neurotrophin receptors NTRK1, NTRK2 and NTRK3. The polypeptide is SH2 domain-containing protein 1A (Sh2d1a) (Rattus norvegicus (Rat)).